Consider the following 314-residue polypeptide: Ribonuclease Z (314 aa).

Residues histidine 62, histidine 64, aspartate 66, histidine 67, histidine 144, aspartate 215, and histidine 273 each coordinate Zn(2+). Residue aspartate 66 is the Proton acceptor of the active site.

This sequence belongs to the RNase Z family. In terms of assembly, homodimer. Zn(2+) is required as a cofactor.

The catalysed reaction is Endonucleolytic cleavage of RNA, removing extra 3' nucleotides from tRNA precursor, generating 3' termini of tRNAs. A 3'-hydroxy group is left at the tRNA terminus and a 5'-phosphoryl group is left at the trailer molecule.. Zinc phosphodiesterase, which displays some tRNA 3'-processing endonuclease activity. Probably involved in tRNA maturation, by removing a 3'-trailer from precursor tRNA. This is Ribonuclease Z from Prochlorococcus marinus (strain NATL2A).